We begin with the raw amino-acid sequence, 188 residues long: Elongation factor P (188 aa).

Residue K34 is modified to N6-(3,6-diaminohexanoyl)-5-hydroxylysine.

It belongs to the elongation factor P family. In terms of processing, may be beta-lysylated on the epsilon-amino group of Lys-34 by the combined action of EpmA and EpmB, and then hydroxylated on the C5 position of the same residue by EpmC (if this protein is present). Lysylation is critical for the stimulatory effect of EF-P on peptide-bond formation. The lysylation moiety may extend toward the peptidyltransferase center and stabilize the terminal 3-CCA end of the tRNA. Hydroxylation of the C5 position on Lys-34 may allow additional potential stabilizing hydrogen-bond interactions with the P-tRNA.

The protein resides in the cytoplasm. It functions in the pathway protein biosynthesis; polypeptide chain elongation. In terms of biological role, involved in peptide bond synthesis. Alleviates ribosome stalling that occurs when 3 or more consecutive Pro residues or the sequence PPG is present in a protein, possibly by augmenting the peptidyl transferase activity of the ribosome. Modification of Lys-34 is required for alleviation. The protein is Elongation factor P of Proteus mirabilis (strain HI4320).